We begin with the raw amino-acid sequence, 363 residues long: Aminomethyltransferase (363 aa).

It belongs to the GcvT family. The glycine cleavage system is composed of four proteins: P, T, L and H.

It carries out the reaction N(6)-[(R)-S(8)-aminomethyldihydrolipoyl]-L-lysyl-[protein] + (6S)-5,6,7,8-tetrahydrofolate = N(6)-[(R)-dihydrolipoyl]-L-lysyl-[protein] + (6R)-5,10-methylene-5,6,7,8-tetrahydrofolate + NH4(+). Functionally, the glycine cleavage system catalyzes the degradation of glycine. This Thermotoga neapolitana (strain ATCC 49049 / DSM 4359 / NBRC 107923 / NS-E) protein is Aminomethyltransferase.